Consider the following 295-residue polypeptide: Acetylglutamate kinase (295 aa).

Residues Gly66–Gly67, Arg88, and Asn193 contribute to the substrate site.

This sequence belongs to the acetylglutamate kinase family. ArgB subfamily.

The protein localises to the cytoplasm. The catalysed reaction is N-acetyl-L-glutamate + ATP = N-acetyl-L-glutamyl 5-phosphate + ADP. It participates in amino-acid biosynthesis; L-arginine biosynthesis; N(2)-acetyl-L-ornithine from L-glutamate: step 2/4. Catalyzes the ATP-dependent phosphorylation of N-acetyl-L-glutamate. In Gluconobacter oxydans (strain 621H) (Gluconobacter suboxydans), this protein is Acetylglutamate kinase.